Consider the following 361-residue polypeptide: Phosphoserine aminotransferase (361 aa).

Position 42 (arginine 42) interacts with L-glutamate. Residues 76 to 77 (GR), tryptophan 102, threonine 154, aspartate 173, and glutamine 196 contribute to the pyridoxal 5'-phosphate site. An N6-(pyridoxal phosphate)lysine modification is found at lysine 197. Position 238–239 (238–239 (NT)) interacts with pyridoxal 5'-phosphate.

The protein belongs to the class-V pyridoxal-phosphate-dependent aminotransferase family. SerC subfamily. As to quaternary structure, homodimer. It depends on pyridoxal 5'-phosphate as a cofactor.

It localises to the cytoplasm. It carries out the reaction O-phospho-L-serine + 2-oxoglutarate = 3-phosphooxypyruvate + L-glutamate. It catalyses the reaction 4-(phosphooxy)-L-threonine + 2-oxoglutarate = (R)-3-hydroxy-2-oxo-4-phosphooxybutanoate + L-glutamate. The protein operates within amino-acid biosynthesis; L-serine biosynthesis; L-serine from 3-phospho-D-glycerate: step 2/3. It functions in the pathway cofactor biosynthesis; pyridoxine 5'-phosphate biosynthesis; pyridoxine 5'-phosphate from D-erythrose 4-phosphate: step 3/5. Functionally, catalyzes the reversible conversion of 3-phosphohydroxypyruvate to phosphoserine and of 3-hydroxy-2-oxo-4-phosphonooxybutanoate to phosphohydroxythreonine. In Idiomarina loihiensis (strain ATCC BAA-735 / DSM 15497 / L2-TR), this protein is Phosphoserine aminotransferase.